The following is a 72-amino-acid chain: UPF0426 protein asl4034 (72 aa).

It belongs to the UPF0426 family.

This Nostoc sp. (strain PCC 7120 / SAG 25.82 / UTEX 2576) protein is UPF0426 protein asl4034.